The sequence spans 338 residues: Heat-inducible transcription repressor HrcA (338 aa).

The protein belongs to the HrcA family.

In terms of biological role, negative regulator of class I heat shock genes (grpE-dnaK-dnaJ and groELS operons). Prevents heat-shock induction of these operons. The protein is Heat-inducible transcription repressor HrcA of Bacillus anthracis (strain A0248).